The sequence spans 342 residues: MRVLLFLLLSLFMLPAFSADNLLRWHDAQHFTVQASMPLKAKRVWKLCALYPSLKDSYWLSLNYGMQEAARRYGVDLKVLEAGGYSQLATQQAQIDQCKQWGAEAILLGSSTTSFPDLQKQVANLPVIELVNAIDAPQVKSRVGVPWFQMGYQPGRYLVQWAHGKPLNVLLMPGPDNAGGSKEMVEGFRAAIAGSPVRIVDIALGDNDIEIQRNLLQEMLERHPEIDVVAGTAIAAEAAMGEGRNLKTPLTVVSFYLSHQVYRGLKRGRVIMAASDQMVWQGELAVEQAIRQLQGQSVSDNVSPPILVLTPKNADREHIRRSLSPGGFRPVYFYQHTSAAKK.

The first 18 residues, 1–18, serve as a signal peptide directing secretion; it reads MRVLLFLLLSLFMLPAFS.

Belongs to the bacterial solute-binding protein 2 family.

The protein localises to the periplasm. Its function is as follows. Upon binding a putative inducer it probably interacts with TorS and allows it to play a role in the induction of the torCAD operon for trimethylamine N-oxide reductase. This is Periplasmic protein TorT (torT) from Escherichia coli O157:H7.